The chain runs to 515 residues: uncharacterized protein (515 aa).

Disordered stretches follow at residues 117 to 188 (DNIL…RKSQ), 362 to 453 (RSTS…AESM), and 496 to 515 (GNAVQEADTESMDDFMDYFN). Basic and acidic residues-rich tracts occupy residues 370–380 (KNVESETKQEE), 388–402 (PAEDETPPMKEEVIE), and 428–438 (PIKEIEDKVEP). The span at 502–515 (ADTESMDDFMDYFN) shows a compositional bias: acidic residues.

This is an uncharacterized protein from Ostreid herpesvirus 1 (isolate France) (OsHV-1).